Reading from the N-terminus, the 396-residue chain is Digeranylgeranylglycerophospholipid reductase 2 (396 aa).

The FAD site is built by Ala13, Glu32, Cys43, Ala44, Gly46, Arg92, Ala116, Asp278, Gly290, and Leu291.

It belongs to the geranylgeranyl reductase family. DGGGPL reductase subfamily. Requires FAD as cofactor.

The catalysed reaction is a 2,3-bis-O-phytanyl-sn-glycerol 1-phospholipid + 8 A = a 2,3-bis-O-(geranylgeranyl)-sn-glycerol 1-phospholipid + 8 AH2. The enzyme catalyses 2,3-bis-O-(phytanyl)-sn-glycerol 1-phosphate + 8 A = 2,3-bis-O-(geranylgeranyl)-sn-glycerol 1-phosphate + 8 AH2. It carries out the reaction CDP-2,3-bis-O-(geranylgeranyl)-sn-glycerol + 8 AH2 = CDP-2,3-bis-O-(phytanyl)-sn-glycerol + 8 A. It catalyses the reaction archaetidylserine + 8 AH2 = 2,3-bis-O-phytanyl-sn-glycero-3-phospho-L-serine + 8 A. It functions in the pathway membrane lipid metabolism; glycerophospholipid metabolism. Functionally, is involved in the reduction of 2,3-digeranylgeranylglycerophospholipids (unsaturated archaeols) into 2,3-diphytanylglycerophospholipids (saturated archaeols) in the biosynthesis of archaeal membrane lipids. Catalyzes the formation of archaetidic acid (2,3-di-O-phytanyl-sn-glyceryl phosphate) from 2,3-di-O-geranylgeranylglyceryl phosphate (DGGGP) via the hydrogenation of each double bond of the isoprenoid chains. Is also probably able to reduce double bonds of geranyl groups in CDP-2,3-bis-O-(geranylgeranyl)-sn-glycerol and archaetidylserine, thus acting at various stages in the biosynthesis of archaeal membrane lipids. In Methanopyrus kandleri (strain AV19 / DSM 6324 / JCM 9639 / NBRC 100938), this protein is Digeranylgeranylglycerophospholipid reductase 2.